A 248-amino-acid polypeptide reads, in one-letter code: DNA repair protein RecO (248 aa).

The protein belongs to the RecO family.

Involved in DNA repair and RecF pathway recombination. This is DNA repair protein RecO from Rubrobacter xylanophilus (strain DSM 9941 / JCM 11954 / NBRC 16129 / PRD-1).